We begin with the raw amino-acid sequence, 281 residues long: Pantothenate synthetase (281 aa).

30 to 37 is an ATP binding site; that stretch reads MGNLHLGH. His-37 functions as the Proton donor in the catalytic mechanism. (R)-pantoate is bound at residue Gln-61. Gln-61 contributes to the beta-alanine binding site. 149–152 serves as a coordination point for ATP; it reads GRKD. A (R)-pantoate-binding site is contributed by Gln-155. ATP contacts are provided by residues Ile-178 and 186–189; that span reads MSSR.

It belongs to the pantothenate synthetase family. Homodimer.

It is found in the cytoplasm. It catalyses the reaction (R)-pantoate + beta-alanine + ATP = (R)-pantothenate + AMP + diphosphate + H(+). It participates in cofactor biosynthesis; (R)-pantothenate biosynthesis; (R)-pantothenate from (R)-pantoate and beta-alanine: step 1/1. Functionally, catalyzes the condensation of pantoate with beta-alanine in an ATP-dependent reaction via a pantoyl-adenylate intermediate. The sequence is that of Pantothenate synthetase from Shewanella sediminis (strain HAW-EB3).